Here is a 283-residue protein sequence, read N- to C-terminus: Pantothenate synthetase (283 aa).

30–37 (MGNLHDGH) provides a ligand contact to ATP. His-37 functions as the Proton donor in the catalytic mechanism. Gln-61 is a binding site for (R)-pantoate. A beta-alanine-binding site is contributed by Gln-61. Position 149–152 (149–152 (GEKD)) interacts with ATP. Gln-155 provides a ligand contact to (R)-pantoate. 186 to 189 (LSSR) provides a ligand contact to ATP.

The protein belongs to the pantothenate synthetase family. As to quaternary structure, homodimer.

The protein resides in the cytoplasm. The catalysed reaction is (R)-pantoate + beta-alanine + ATP = (R)-pantothenate + AMP + diphosphate + H(+). It functions in the pathway cofactor biosynthesis; (R)-pantothenate biosynthesis; (R)-pantothenate from (R)-pantoate and beta-alanine: step 1/1. In terms of biological role, catalyzes the condensation of pantoate with beta-alanine in an ATP-dependent reaction via a pantoyl-adenylate intermediate. The polypeptide is Pantothenate synthetase (Escherichia coli (strain SMS-3-5 / SECEC)).